A 387-amino-acid polypeptide reads, in one-letter code: Succinate--CoA ligase [ADP-forming] subunit beta (387 aa).

One can recognise an ATP-grasp domain in the interval 9–244 (KQLFAEYGIP…KTQEDETEVL (236 aa)). ATP is bound by residues Lys-46, 53–55 (GRG), Gly-102, and Glu-107. The Mg(2+) site is built by Asn-199 and Asp-213. Residues Asn-264 and 321–323 (GIV) contribute to the substrate site.

Belongs to the succinate/malate CoA ligase beta subunit family. As to quaternary structure, heterotetramer of two alpha and two beta subunits. It depends on Mg(2+) as a cofactor.

The catalysed reaction is succinate + ATP + CoA = succinyl-CoA + ADP + phosphate. The enzyme catalyses GTP + succinate + CoA = succinyl-CoA + GDP + phosphate. The protein operates within carbohydrate metabolism; tricarboxylic acid cycle; succinate from succinyl-CoA (ligase route): step 1/1. Succinyl-CoA synthetase functions in the citric acid cycle (TCA), coupling the hydrolysis of succinyl-CoA to the synthesis of either ATP or GTP and thus represents the only step of substrate-level phosphorylation in the TCA. The beta subunit provides nucleotide specificity of the enzyme and binds the substrate succinate, while the binding sites for coenzyme A and phosphate are found in the alpha subunit. This Xylella fastidiosa (strain 9a5c) protein is Succinate--CoA ligase [ADP-forming] subunit beta.